The primary structure comprises 502 residues: MLLRSAGKLNVGTKKEDGESTAPTPRPKVLRCKCHHHCPEDSVNNICSTDGYCFTMIEEDDSGLPVVTSGCLGLEGSDFQCRDTPIPHQRRSIECCTERNECNKDLHPTLPPLKNRDFVDGPIHHRALLISVTVCSLLLVLIILFCYFRYKRQETRPRYSIGLEQDETYIPPGESLRDLIEQSQSSGSGSGLPLLVQRTIAKQIQMVKQIGKGRYGEVWMGKWRGEKVAVKVFFTTEEASWFRETEIYQTVLMRHENILGFIAADIKGTGSWTQLYLITDYHENGSLYDYLKSTTLDAKSMLKLAYSSVSGLCHLHTEIFSTQGKPAIAHRDLKSKNILVKKNGTCCIADLGLAVKFISDTNEVDIPPNTRVGTKRYMPPEVLDESLNRNHFQSYIMADMYSFGLILWEVARRCVSGGIVEEYQLPYHDLVPSDPSYEDMREIVCIKKLRPSFPNRWSSDECLRQMGKLMTECWAHNPASRLTALRVKKTLAKMSESQDIKL.

A signal peptide spans 1–13 (MLLRSAGKLNVGT). The segment at 1–25 (MLLRSAGKLNVGTKKEDGESTAPTP) is disordered. The Extracellular portion of the chain corresponds to 14–126 (KKEDGESTAP…DFVDGPIHHR (113 aa)). Intrachain disulfides connect cysteine 32-cysteine 53, cysteine 34-cysteine 38, cysteine 47-cysteine 71, cysteine 81-cysteine 95, and cysteine 96-cysteine 102. A helical transmembrane segment spans residues 127–148 (ALLISVTVCSLLLVLIILFCYF). Residues 149-502 (RYKRQETRPR…KMSESQDIKL (354 aa)) lie on the Cytoplasmic side of the membrane. The GS domain maps to 174 to 203 (ESLRDLIEQSQSSGSGSGLPLLVQRTIAKQ). Positions 204–494 (IQMVKQIGKG…LRVKKTLAKM (291 aa)) constitute a Protein kinase domain. Residues 210 to 218 (IGKGRYGEV) and lysine 231 each bind ATP. Aspartate 332 acts as the Proton acceptor in catalysis.

The protein belongs to the protein kinase superfamily. TKL Ser/Thr protein kinase family. TGFB receptor subfamily. In terms of assembly, interacts with high affinity with GDF5; positively regulates chondrocyte differentiation. Interacts with SCUBE3. Interacts with TSC22D1/TSC-22. Interacts with TGFBR3. Mg(2+) is required as a cofactor. Requires Mn(2+) as cofactor. Autophosphorylated.

It localises to the cell membrane. The enzyme catalyses L-threonyl-[receptor-protein] + ATP = O-phospho-L-threonyl-[receptor-protein] + ADP + H(+). The catalysed reaction is L-seryl-[receptor-protein] + ATP = O-phospho-L-seryl-[receptor-protein] + ADP + H(+). On ligand binding, forms a receptor complex consisting of two type II and two type I transmembrane serine/threonine kinases. Type II receptors phosphorylate and activate type I receptors which autophosphorylate, then bind and activate SMAD transcriptional regulators. Receptor for BMP7/OP-1 and GDF5. Positively regulates chondrocyte differentiation through GDF5 interaction. The polypeptide is Bone morphogenetic protein receptor type-1B (BMPR1B) (Homo sapiens (Human)).